The primary structure comprises 520 residues: Cytochrome P450 monooxygenase btcC (520 aa).

Residues 2–22 (IFLLTLAGLKVLSIVILFGII) traverse the membrane as a helical segment. An N-linked (GlcNAc...) asparagine glycan is attached at Asn177. Heme is bound at residue Cys448. N-linked (GlcNAc...) asparagine glycosylation occurs at Asn511.

The protein belongs to the cytochrome P450 family. Heme is required as a cofactor.

It is found in the membrane. Its pathway is secondary metabolite biosynthesis; terpenoid biosynthesis. Cytochrome P4590 monooxygenase part of the gene cluster that mediates the biosynthesis of betaestacins. The bifunctional terpene synthase btcA converts isopentenyl diphosphate (IPP) and dimethylallyl diphosphate (DMAPP) into the sesterterpene betaestacin I. The C-terminal prenyltransferase (PT) domain of btcA catalyzes formation of GFPP, whereas the N-terminal terpene cyclase (TC) domain catalyzes the cyclization of GFPP into betaestacin I. The cytochrome P450 monooxygenase btcB oxidizes the C25 methyl group of betaestacin I to yield the carboxylic acid betaestacin IV via the alcohol betaestacin III. The cytochrome P450 monooxygenase btcC further catalyzes the multistep oxidation of betaestacin IV to produce several compounds, including betaestacins Va, Vb, Vc and VI. In Colletotrichum orbiculare (strain 104-T / ATCC 96160 / CBS 514.97 / LARS 414 / MAFF 240422) (Cucumber anthracnose fungus), this protein is Cytochrome P450 monooxygenase btcC.